We begin with the raw amino-acid sequence, 369 residues long: tRNA 2-selenouridine synthase (369 aa).

The Rhodanese domain maps to 12-136; it reads FLEDTPLMDV…LRNFLFETTR (125 aa). Catalysis depends on Cys95, which acts as the S-selanylcysteine intermediate.

The protein belongs to the SelU family. As to quaternary structure, monomer.

It catalyses the reaction 5-methylaminomethyl-2-thiouridine(34) in tRNA + selenophosphate + (2E)-geranyl diphosphate + H2O + H(+) = 5-methylaminomethyl-2-selenouridine(34) in tRNA + (2E)-thiogeraniol + phosphate + diphosphate. The catalysed reaction is 5-methylaminomethyl-2-thiouridine(34) in tRNA + (2E)-geranyl diphosphate = 5-methylaminomethyl-S-(2E)-geranyl-thiouridine(34) in tRNA + diphosphate. It carries out the reaction 5-methylaminomethyl-S-(2E)-geranyl-thiouridine(34) in tRNA + selenophosphate + H(+) = 5-methylaminomethyl-2-(Se-phospho)selenouridine(34) in tRNA + (2E)-thiogeraniol. The enzyme catalyses 5-methylaminomethyl-2-(Se-phospho)selenouridine(34) in tRNA + H2O = 5-methylaminomethyl-2-selenouridine(34) in tRNA + phosphate. In terms of biological role, involved in the post-transcriptional modification of the uridine at the wobble position (U34) of tRNA(Lys), tRNA(Glu) and tRNA(Gln). Catalyzes the conversion of 2-thiouridine (S2U-RNA) to 2-selenouridine (Se2U-RNA). Acts in a two-step process involving geranylation of 2-thiouridine (S2U) to S-geranyl-2-thiouridine (geS2U) and subsequent selenation of the latter derivative to 2-selenouridine (Se2U) in the tRNA chain. The chain is tRNA 2-selenouridine synthase from Pseudomonas paraeruginosa (strain DSM 24068 / PA7) (Pseudomonas aeruginosa (strain PA7)).